The primary structure comprises 373 residues: Alpha-1,3-mannosyl-glycoprotein 4-beta-N-acetylglucosaminyltransferase-like protein MGAT4D (373 aa).

Residues 1-5 (MKAKN) lie on the Cytoplasmic side of the membrane. Residues 6–26 (VNLLFAFVAVLLFGFSCFCIS) form a helical; Signal-anchor for type II membrane protein membrane-spanning segment. Residues 27 to 373 (RMNQTNNQLI…REQHLKDNYY (347 aa)) lie on the Lumenal side of the membrane. Residues N29, N54, and N144 are each glycosylated (N-linked (GlcNAc...) asparagine).

It belongs to the glycosyltransferase 54 family. As to quaternary structure, isoform 2 self-associates; specifically in the endoplasmic reticulum prior to its translocation to the Golgi. Isoform 1 and isoform 2 interact with MGAT1, MGAT3 and MAN2A2; isoform 2 interacts specifically with MGAT1 in the Golgi. Post-translationally, isoform 2 is N-glycosylated; consisting of high-mannose and/or hybrid glycans. As to expression, isoform 1 and isoform 2 are specifically expressed in testis. Isoform 2 is expressed in spermatocytes but not in spermatids. Isoform 1 is expressed in spermatids.

It localises to the endoplasmic reticulum membrane. Its subcellular location is the endoplasmic reticulum-Golgi intermediate compartment membrane. It is found in the golgi apparatus membrane. Functionally, may play a role in male spermatogenesis. In vitro acts as inhibitor of MGAT1 activity causing cell surface proteins to carry mainly high mannose N-glycans. The function is mediated by its lumenal domain and occurs specifically in the Golgi. A catalytic glucosyltransferase activity is not detected. May be involved in regulation of Sertoli-germ cell interactions during specific stages of spermatogenesis. The chain is Alpha-1,3-mannosyl-glycoprotein 4-beta-N-acetylglucosaminyltransferase-like protein MGAT4D from Mus musculus (Mouse).